A 398-amino-acid polypeptide reads, in one-letter code: MDTQAFRRSLHHSDRYNRRGFDSPTKRAQALEEAYQSDLITSIRNNSFTYKKGRLNIKLAQAFGFCWGVERAVAMAYETRRHYPDENIWITNEIIHNPSVNDHLRKMNVKFISAKNGIKDFSLVSDGDVVILPAFGATVQEMKLLHEKGCHIIDTTCPWVSKVWHTVEKHKKHTFTSIIHGKFKHEETLATSSFADKYLVVLNLEEANYVSEYILGRGNKNHFLNKFAQAFSNGFDPDKDLDRVGVANQTTMLKSETEEIGKVFEKTMLHKFGPEKLNSHFLAFNTICDATEERQDAMFSLVDEDLDILVVIGGYNSSNTTHLQEIAINKNISSFHIDTPERISVKENSILHKPLKSEMVLKKNFIPDGEIKVGITSGASTPDKIVADVIEKLIAITK.

Residue C66 coordinates [4Fe-4S] cluster. A (2E)-4-hydroxy-3-methylbut-2-enyl diphosphate-binding site is contributed by H96. H96 is a dimethylallyl diphosphate binding site. H96 is an isopentenyl diphosphate binding site. C157 is a binding site for [4Fe-4S] cluster. (2E)-4-hydroxy-3-methylbut-2-enyl diphosphate is bound at residue H185. H185 serves as a coordination point for dimethylallyl diphosphate. Residue H185 coordinates isopentenyl diphosphate. E187 serves as the catalytic Proton donor. Residue T250 coordinates (2E)-4-hydroxy-3-methylbut-2-enyl diphosphate. Residue C288 coordinates [4Fe-4S] cluster. S317, S318, N319, and S380 together coordinate (2E)-4-hydroxy-3-methylbut-2-enyl diphosphate. Positions 317, 318, 319, and 380 each coordinate dimethylallyl diphosphate. S317, S318, N319, and S380 together coordinate isopentenyl diphosphate.

The protein belongs to the IspH family. [4Fe-4S] cluster is required as a cofactor.

The enzyme catalyses isopentenyl diphosphate + 2 oxidized [2Fe-2S]-[ferredoxin] + H2O = (2E)-4-hydroxy-3-methylbut-2-enyl diphosphate + 2 reduced [2Fe-2S]-[ferredoxin] + 2 H(+). The catalysed reaction is dimethylallyl diphosphate + 2 oxidized [2Fe-2S]-[ferredoxin] + H2O = (2E)-4-hydroxy-3-methylbut-2-enyl diphosphate + 2 reduced [2Fe-2S]-[ferredoxin] + 2 H(+). The protein operates within isoprenoid biosynthesis; dimethylallyl diphosphate biosynthesis; dimethylallyl diphosphate from (2E)-4-hydroxy-3-methylbutenyl diphosphate: step 1/1. Its pathway is isoprenoid biosynthesis; isopentenyl diphosphate biosynthesis via DXP pathway; isopentenyl diphosphate from 1-deoxy-D-xylulose 5-phosphate: step 6/6. Its function is as follows. Catalyzes the conversion of 1-hydroxy-2-methyl-2-(E)-butenyl 4-diphosphate (HMBPP) into a mixture of isopentenyl diphosphate (IPP) and dimethylallyl diphosphate (DMAPP). Acts in the terminal step of the DOXP/MEP pathway for isoprenoid precursor biosynthesis. This chain is 4-hydroxy-3-methylbut-2-enyl diphosphate reductase, found in Prochlorococcus marinus subsp. pastoris (strain CCMP1986 / NIES-2087 / MED4).